Consider the following 717-residue polypeptide: Delta-like protein D (717 aa).

An N-terminal signal peptide occupies residues 1–19 (MGRLMIAVLLCVMISQGFC). Residues 20-547 (SGVFELKLQE…EEDDGGFPWT (528 aa)) lie on the Extracellular side of the membrane. The DSL domain maps to 175 to 219 (FVCDEHYYGEGCSVFCRPRDDTFGHFTCGERGEIICNSGWKGQYC). Cystine bridges form between Cys177-Cys186, Cys190-Cys202, Cys210-Cys219, Cys224-Cys235, Cys228-Cys241, Cys243-Cys252, Cys261-Cys266, Cys274-Cys283, Cys290-Cys302, Cys296-Cys312, Cys314-Cys323, Cys330-Cys341, Cys335-Cys350, Cys352-Cys361, Cys368-Cys379, Cys373-Cys389, Cys391-Cys400, Cys407-Cys418, Cys412-Cys427, Cys429-Cys438, Cys445-Cys456, Cys450-Cys465, Cys467-Cys476, Cys483-Cys494, Cys488-Cys503, and Cys505-Cys514. 3 EGF-like domains span residues 220–253 (TEPICLPGCDEDHGFCDKPGECKCRVGFSGKYCD), 257–284 (RYPGCLHGTCQQPWQCNCQEGWGGLFCN), and 286–324 (DLNYCTHHKPCQNGATCTNTGQGSYTCSCRPGFTGDSCE). Residues 326-362 (EVNECSGSPCRNGGSCTDLENTYSCTCPPGFYGRNCE) form the EGF-like 4; calcium-binding domain. 2 EGF-like domains span residues 364 to 401 (SAMTCADGPCFNGGHCADNPEGGYFCQCPMGYAGFNCE) and 403 to 439 (KIDHCSSNPCSNDAQCLDLVDSYLCQCPEGFTGTHCE). One can recognise an EGF-like 7; calcium-binding domain in the interval 441 to 477 (NIDECATYPCQNGGTCQDGLSDYTCTCPPGYTGKNCT). The N-linked (GlcNAc...) asparagine glycan is linked to Asn475. The EGF-like 8 domain occupies 479 to 515 (AVNKCLHNPCHNGATCHEMDNRYVCACIPGYGGRNCQ). A helical membrane pass occupies residues 548–568 (AVCAGIILVLLVLIGGSVFVI). The Cytoplasmic portion of the chain corresponds to 569–717 (YIRLKLQQRS…KDECIIATEV (149 aa)). The disordered stretch occupies residues 649–693 (EDLGKEDSERSEATKCEPLDSDSEEKHRNHLKSDSSERKRTESLC).

In terms of assembly, interacts with mib. In terms of processing, ubiquitinated by mib, leading to its endocytosis and subsequent degradation. As to expression, expressed in both mesodermal and neuroectodermal regions. In the developing nervous system, it is expressed in overlapping regions with deltaB (dlb) and deltaA (dla); in the neural plate, dld is expressed in patches of contiguous cells with dla, while dlb is confined to scattered cells within those patches that will differentiate as neurons. In somites, it marks the anterior part of each formed somite, while deltaC (dlc) marks the posterior part. In 24 hours embryos, expressed in the hindbrain in stripes adjacent to rhombomere boundaries, but not in the actual boundary cells.

Its subcellular location is the membrane. In terms of biological role, acts as a ligand for Notch receptors and is involved in primary neurogenesis and somitogenesis. Can activate Notch receptors, thereby playing a key role in lateral inhibition, a process that prevents the immediate neighbors of each nascent neural cell from simultaneously embarking on neural differentiation. Required in somite segmentation to keep the oscillations of neighboring presomitic mesoderm cells synchronized. This chain is Delta-like protein D (dld), found in Danio rerio (Zebrafish).